Reading from the N-terminus, the 677-residue chain is MSAAKNEMYYSLLEWFKTLNLNAPHADAESLADGVAVAQALNQFAPESFTDSWLAKIKASAVGINWRLRMSNLKKVTQSLYDYYSEVLNYTLSDFVKPDVQRIAEKCDLVELERLLQLVLGCAVNCAKKQSYITEIMCLEEELQANIMRALQELESSRNAAEGGIVTSLSRSSISGMLDGKVLQEERDAMAQKCFETEKKMLLLIDEKTNLQQELQRVQKEFARLEHSSTVIGDDGVSLGPVQTGSVRYNELRRQLDLLKEELLQSEGAREDLKLKAQQQETDLWHMQMRIDELLKSTAEVTTLKDEVDVLRESNDKLKICEGQLDTYKKKLEDYNDLKKQVKILEERSADYVQQNAQFEEDAKRYANTKGQIELFKKEIQDLHTKLDSESSKNVKLEFDNKNLEGKNLALQRAKDSLLKERDNLRETVDELKCGHLSSNSGLTGTTVSRELQPPATVEKMQRLEAENKALREGQGGQTALAQLLDDANKRCENLREQLKTANERILSLSHASQSDDPILKESEFGKQIKQLMELNEQKTLQLEESVTQSSSLQCKVTQLETNLTAREQEVMAYDAKYRKCLEKAKEVIKSFDPRIASAIDASALEKYFDVVEEEPKPKMSVMEEQLMTSAFYRLGVNAQRDAVDSKLAILMGSGQTFLARQRQSAPRKSLSAMKSK.

The region spanning 6 to 123 is the Calponin-homology (CH) domain; sequence NEMYYSLLEW…RLLQLVLGCA (118 aa). 2 coiled-coil regions span residues 135–436 and 478–588; these read EIMC…KCGH and QTAL…AKEV.

It belongs to the hook family. As to quaternary structure, homodimer. Interacts with microtubules via its N-terminus.

The protein localises to the cytoplasm. The protein resides in the cytoskeleton. It localises to the endosome. Its subcellular location is the synapse. Involved in endocytic trafficking by stabilizing organelles of the endocytic pathway. Probably acts as a cytoskeletal linker protein required to tether endosome vesicles to the cytoskeleton. Involved in modulation of endocytosis at stages required for down-regulation of membrane proteins that control synapse size. Not involved in synaptic vesicle recycling. Required in R7 cells for boss endocytosis into multivesicular bodies (MVBs). Has a role in regulating adult longevity. The polypeptide is Protein hook (Drosophila persimilis (Fruit fly)).